A 184-amino-acid chain; its full sequence is Probable archaeosortase E (184 aa).

4 consecutive transmembrane segments (helical) span residues 27–47, 86–106, 114–134, and 151–171; these read ILFL…LSYF, VVEE…IIVY, IIGI…IVLI, and IAGY…YLKI. Cysteine 90 (acyl-thioester intermediate) is an active-site residue. Residue arginine 130 is the Proton donor of the active site.

The protein belongs to the exosortase/archaeosortase family. Archaeosortase E subfamily.

The protein resides in the cell membrane. In terms of biological role, transpeptidase that recognizes and modifies its substrate by proteolytic cleavage of a sorting signal. Following cleavage, a covalent intermediate is formed via a thioester bond between the archaeosortase and its substrate, which is then transferred and covalently attached to the cell membrane. The chain is Probable archaeosortase E from Methanocaldococcus jannaschii (strain ATCC 43067 / DSM 2661 / JAL-1 / JCM 10045 / NBRC 100440) (Methanococcus jannaschii).